Consider the following 285-residue polypeptide: Phosphatidylglycerol--prolipoprotein diacylglyceryl transferase (285 aa).

A run of 4 helical transmembrane segments spans residues 30-50 (LEIR…HWHI), 67-87 (LMLW…ILLY), 103-123 (WHGG…VSIV), and 129-149 (VRVM…LFLG). R150 is a binding site for a 1,2-diacyl-sn-glycero-3-phospho-(1'-sn-glycerol). A run of 3 helical transmembrane segments spans residues 184-204 (SQVY…SILA), 213-233 (FGVL…AVEF), and 252-272 (GQVL…LTVL).

This sequence belongs to the Lgt family.

It localises to the cell inner membrane. The catalysed reaction is L-cysteinyl-[prolipoprotein] + a 1,2-diacyl-sn-glycero-3-phospho-(1'-sn-glycerol) = an S-1,2-diacyl-sn-glyceryl-L-cysteinyl-[prolipoprotein] + sn-glycerol 1-phosphate + H(+). The protein operates within protein modification; lipoprotein biosynthesis (diacylglyceryl transfer). In terms of biological role, catalyzes the transfer of the diacylglyceryl group from phosphatidylglycerol to the sulfhydryl group of the N-terminal cysteine of a prolipoprotein, the first step in the formation of mature lipoproteins. This Anaplasma marginale (strain Florida) protein is Phosphatidylglycerol--prolipoprotein diacylglyceryl transferase.